The following is a 314-amino-acid chain: Dihydroorotate dehydrogenase (fumarate) (314 aa).

Substrate contacts are provided by residues Lys-46, 70–74 (NSMGL), and Asn-130. 46–47 (KS) contacts FMN. Residue Asn-130 participates in FMN binding. Active-site nucleophile residues include Ser-132 and Cys-133. FMN is bound by residues Lys-167 and Ile-195. 196–197 (NS) serves as a coordination point for substrate. Residues Gly-224, 252-253 (GG), and 274-275 (GT) each bind FMN.

The protein belongs to the dihydroorotate dehydrogenase family. Type 1 subfamily. As to quaternary structure, homodimer. Requires FMN as cofactor.

Its subcellular location is the cytoplasm. It catalyses the reaction (S)-dihydroorotate + fumarate = orotate + succinate. Its pathway is pyrimidine metabolism; UMP biosynthesis via de novo pathway. In terms of biological role, catalyzes the conversion of dihydroorotate to orotate with fumarate as the electron acceptor. The chain is Dihydroorotate dehydrogenase (fumarate) (URA1) from Saccharomyces bayanus (Yeast).